Consider the following 129-residue polypeptide: Small ribosomal subunit protein uS11 (129 aa).

Belongs to the universal ribosomal protein uS11 family. In terms of assembly, part of the 30S ribosomal subunit. Interacts with proteins S7 and S18. Binds to IF-3.

In terms of biological role, located on the platform of the 30S subunit, it bridges several disparate RNA helices of the 16S rRNA. Forms part of the Shine-Dalgarno cleft in the 70S ribosome. This is Small ribosomal subunit protein uS11 from Dechloromonas aromatica (strain RCB).